We begin with the raw amino-acid sequence, 151 residues long: Small ribosomal subunit protein uS13 (151 aa).

This sequence belongs to the universal ribosomal protein uS13 family. Part of the 30S ribosomal subunit. Forms a loose heterodimer with protein S19. Forms two bridges to the 50S subunit in the 70S ribosome.

Located at the top of the head of the 30S subunit, it contacts several helices of the 16S rRNA. In the 70S ribosome it contacts the 23S rRNA (bridge B1a) and protein L5 of the 50S subunit (bridge B1b), connecting the 2 subunits; these bridges are implicated in subunit movement. The sequence is that of Small ribosomal subunit protein uS13 from Methanospirillum hungatei JF-1 (strain ATCC 27890 / DSM 864 / NBRC 100397 / JF-1).